A 227-amino-acid chain; its full sequence is Arginine ABC transporter permease protein ArtM (227 aa).

The ABC transmembrane type-1 domain maps to 13 to 209; the sequence is IPTSLLLTVV…IITGIATLLL (197 aa). The next 5 helical transmembrane spans lie at 17 to 37, 51 to 71, 78 to 98, 155 to 175, and 188 to 208; these read LLLT…LTFL, LYLT…IYAG, IIDS…ALAL, IILV…DIMG, and LTIY…ATLL.

It belongs to the binding-protein-dependent transport system permease family. HisMQ subfamily. As to quaternary structure, the complex is composed of two ATP-binding proteins (ArtP), two transmembrane proteins (ArtM and ArtQ) and a solute-binding protein (ArtI).

It localises to the cell inner membrane. Its function is as follows. Part of the ABC transporter complex ArtPIQM involved in arginine transport. Probably responsible for the translocation of the substrate across the membrane. The polypeptide is Arginine ABC transporter permease protein ArtM (artM) (Haemophilus influenzae (strain ATCC 51907 / DSM 11121 / KW20 / Rd)).